The chain runs to 1890 residues: Putative aminopeptidase-2 (1890 aa).

The N-terminal stretch at 1-20 (MRRKLLLLLCFIGLFSLIST) is a signal peptide. The N-linked (GlcNAc...) asparagine glycan is linked to Asn110. Substrate is bound by residues Glu220 and 354 to 358 (GAMEN). Position 390 (His390) interacts with Zn(2+). Catalysis depends on Glu391, which acts as the Proton acceptor. Zn(2+) is bound by residues His394 and Glu413. 7 N-linked (GlcNAc...) asparagine glycosylation sites follow: Asn534, Asn581, Asn785, Asn803, Asn914, Asn1024, and Asn1094. A substrate-binding site is contributed by Glu1143. Residue Asn1245 is glycosylated (N-linked (GlcNAc...) asparagine). 1280-1284 (GAMEN) provides a ligand contact to substrate. His1316 provides a ligand contact to Zn(2+). Glu1317 functions as the Proton acceptor in the catalytic mechanism. Zn(2+) contacts are provided by His1320 and Glu1339. N-linked (GlcNAc...) asparagine glycans are attached at residues Asn1451, Asn1521, Asn1826, and Asn1841.

The protein belongs to the peptidase M1 family. Zn(2+) is required as a cofactor.

Putative aminopeptidase which plays a role in oocyte maturation. The chain is Putative aminopeptidase-2 from Caenorhabditis elegans.